Reading from the N-terminus, the 373-residue chain is Ribosomal RNA small subunit methyltransferase H (373 aa).

S-adenosyl-L-methionine is bound by residues 92-94, aspartate 111, tyrosine 138, aspartate 159, and glutamine 166; that span reads GGH. Basic and acidic residues-rich tracts occupy residues 343–355 and 363–373; these read AERA…ERNP and RALEKVGGRGS. Positions 343-373 are disordered; sequence AERADEQEIERNPRSAPVRLRALEKVGGRGS.

It belongs to the methyltransferase superfamily. RsmH family.

Its subcellular location is the cytoplasm. It carries out the reaction cytidine(1402) in 16S rRNA + S-adenosyl-L-methionine = N(4)-methylcytidine(1402) in 16S rRNA + S-adenosyl-L-homocysteine + H(+). In terms of biological role, specifically methylates the N4 position of cytidine in position 1402 (C1402) of 16S rRNA. The chain is Ribosomal RNA small subunit methyltransferase H from Mycolicibacterium smegmatis (strain ATCC 700084 / mc(2)155) (Mycobacterium smegmatis).